The primary structure comprises 338 residues: Methionine import ATP-binding protein MetN 2 (338 aa).

Residues 2 to 242 (IEIEKVCVDF…PQHAFTQQLV (241 aa)) enclose the ABC transporter domain. 39–46 (GTSGAGKS) is a binding site for ATP.

It belongs to the ABC transporter superfamily. Methionine importer (TC 3.A.1.24) family. In terms of assembly, the complex is composed of two ATP-binding proteins (MetN), two transmembrane proteins (MetI) and a solute-binding protein (MetQ).

The protein resides in the cell inner membrane. The enzyme catalyses L-methionine(out) + ATP + H2O = L-methionine(in) + ADP + phosphate + H(+). It carries out the reaction D-methionine(out) + ATP + H2O = D-methionine(in) + ADP + phosphate + H(+). Functionally, part of the ABC transporter complex MetNIQ involved in methionine import. Responsible for energy coupling to the transport system. The protein is Methionine import ATP-binding protein MetN 2 of Salmonella typhimurium (strain LT2 / SGSC1412 / ATCC 700720).